Here is a 218-residue protein sequence, read N- to C-terminus: Stromal cell-derived factor 2-like protein (218 aa).

Residues methionine 1–glycine 21 form the signal peptide. 3 consecutive MIR domains span residues glycine 34–valine 88, glycine 96–glutamate 151, and glycine 154–glycine 208. An N-linked (GlcNAc...) asparagine glycan is attached at asparagine 214.

As to quaternary structure, interacts with ERDJ3B.

Its subcellular location is the endoplasmic reticulum. Its function is as follows. Involved in the endoplasmic reticulum (ER) protein quality control and unfolded protein response. May be involved in the quality control of glycoproteins. Forms a complex in the ER with ERDJ3B and MED37A/BIP1 which is required for the proper accumulation and function of the surface-exposed leucine-rich repeat receptor kinases EFR involved in pathogen-associated molecular pattern (PAMP) triggered immunity. In Arabidopsis thaliana (Mouse-ear cress), this protein is Stromal cell-derived factor 2-like protein (SDF2).